Here is a 129-residue protein sequence, read N- to C-terminus: Ribosome-binding factor A (129 aa).

This sequence belongs to the RbfA family. As to quaternary structure, monomer. Binds 30S ribosomal subunits, but not 50S ribosomal subunits or 70S ribosomes.

The protein resides in the cytoplasm. One of several proteins that assist in the late maturation steps of the functional core of the 30S ribosomal subunit. Associates with free 30S ribosomal subunits (but not with 30S subunits that are part of 70S ribosomes or polysomes). Required for efficient processing of 16S rRNA. May interact with the 5'-terminal helix region of 16S rRNA. This chain is Ribosome-binding factor A, found in Ectopseudomonas mendocina (strain ymp) (Pseudomonas mendocina).